A 167-amino-acid chain; its full sequence is NAD(P)H-quinone oxidoreductase subunit I, chloroplastic (167 aa).

4Fe-4S ferredoxin-type domains lie at 55-84 (GRIH…VDWK) and 95-124 (LNYS…MTEE). The [4Fe-4S] cluster site is built by cysteine 64, cysteine 67, cysteine 70, cysteine 74, cysteine 104, cysteine 107, cysteine 110, and cysteine 114.

The protein belongs to the complex I 23 kDa subunit family. As to quaternary structure, NDH is composed of at least 16 different subunits, 5 of which are encoded in the nucleus. [4Fe-4S] cluster serves as cofactor.

The protein resides in the plastid. It is found in the chloroplast thylakoid membrane. The catalysed reaction is a plastoquinone + NADH + (n+1) H(+)(in) = a plastoquinol + NAD(+) + n H(+)(out). It carries out the reaction a plastoquinone + NADPH + (n+1) H(+)(in) = a plastoquinol + NADP(+) + n H(+)(out). In terms of biological role, NDH shuttles electrons from NAD(P)H:plastoquinone, via FMN and iron-sulfur (Fe-S) centers, to quinones in the photosynthetic chain and possibly in a chloroplast respiratory chain. The immediate electron acceptor for the enzyme in this species is believed to be plastoquinone. Couples the redox reaction to proton translocation, and thus conserves the redox energy in a proton gradient. The chain is NAD(P)H-quinone oxidoreductase subunit I, chloroplastic from Citrus sinensis (Sweet orange).